Here is a 90-residue protein sequence, read N- to C-terminus: Cell division topological specificity factor (90 aa).

The protein belongs to the MinE family.

In terms of biological role, prevents the cell division inhibition by proteins MinC and MinD at internal division sites while permitting inhibition at polar sites. This ensures cell division at the proper site by restricting the formation of a division septum at the midpoint of the long axis of the cell. The polypeptide is Cell division topological specificity factor (Lachnoclostridium phytofermentans (strain ATCC 700394 / DSM 18823 / ISDg) (Clostridium phytofermentans)).